The following is a 331-amino-acid chain: Phosphatidylinositol transfer protein 4 (331 aa).

Belongs to the PtdIns transfer protein family. PI transfer class IIA subfamily.

Its function is as follows. Catalyzes the transfer of PtdIns and phosphatidylcholine between membranes. This is Phosphatidylinositol transfer protein 4 (pitD) from Dictyostelium discoideum (Social amoeba).